A 1463-amino-acid chain; its full sequence is Chitin binding domain (ChtBD2) containing chtb-1 (1463 aa).

The first 17 residues, 1-17 (MLRNLILITLLVASGHG), serve as a signal peptide directing secretion. The segment at 70–99 (SSVPSVPAENTQPQQHPKARKPASPNICEQ) is disordered. Residues 94–164 (PNICEQDNGA…IVPKRMSSLS (71 aa)) form the Chitin-binding type-2 domain. A disulfide bond links C141 and C154. Disordered stretches follow at residues 720–773 (IDSD…DFPI) and 841–869 (KNPK…FPDS). The span at 722-734 (SDTNSTTNPSQPE) shows a compositional bias: polar residues. Basic residues-rich tracts occupy residues 740–756 (NNTK…KPKK) and 843–853 (PKKRKTKRRKQ).

In Caenorhabditis elegans, this protein is Chitin binding domain (ChtBD2) containing chtb-1.